The primary structure comprises 488 residues: Protein nucleotidyltransferase YdiU (488 aa).

Positions 91, 93, 94, 114, 126, 127, 177, and 184 each coordinate ATP. Residues 108–127 (RFDIQLKGSGPTPYSRRGDG) are disordered. Catalysis depends on aspartate 253, which acts as the Proton acceptor. Residues asparagine 254 and aspartate 263 each coordinate Mg(2+). An ATP-binding site is contributed by aspartate 263.

It belongs to the SELO family. Requires Mg(2+) as cofactor. The cofactor is Mn(2+).

It carries out the reaction L-seryl-[protein] + ATP = 3-O-(5'-adenylyl)-L-seryl-[protein] + diphosphate. It catalyses the reaction L-threonyl-[protein] + ATP = 3-O-(5'-adenylyl)-L-threonyl-[protein] + diphosphate. The enzyme catalyses L-tyrosyl-[protein] + ATP = O-(5'-adenylyl)-L-tyrosyl-[protein] + diphosphate. The catalysed reaction is L-histidyl-[protein] + UTP = N(tele)-(5'-uridylyl)-L-histidyl-[protein] + diphosphate. It carries out the reaction L-seryl-[protein] + UTP = O-(5'-uridylyl)-L-seryl-[protein] + diphosphate. It catalyses the reaction L-tyrosyl-[protein] + UTP = O-(5'-uridylyl)-L-tyrosyl-[protein] + diphosphate. Functionally, nucleotidyltransferase involved in the post-translational modification of proteins. It can catalyze the addition of adenosine monophosphate (AMP) or uridine monophosphate (UMP) to a protein, resulting in modifications known as AMPylation and UMPylation. In Bacillus anthracis (strain A0248), this protein is Protein nucleotidyltransferase YdiU.